Here is a 1097-residue protein sequence, read N- to C-terminus: DNA-directed RNA polymerase subunit beta (1097 aa).

A disordered region spans residues 1072-1097; that stretch reads QDVNPRRSTPSRPTYESLGVADYDED.

The protein belongs to the RNA polymerase beta chain family. In terms of assembly, in cyanobacteria the RNAP catalytic core is composed of 2 alpha, 1 beta, 1 beta', 1 gamma and 1 omega subunit. When a sigma factor is associated with the core the holoenzyme is formed, which can initiate transcription.

It catalyses the reaction RNA(n) + a ribonucleoside 5'-triphosphate = RNA(n+1) + diphosphate. DNA-dependent RNA polymerase catalyzes the transcription of DNA into RNA using the four ribonucleoside triphosphates as substrates. The protein is DNA-directed RNA polymerase subunit beta of Synechococcus sp. (strain WH7803).